An 868-amino-acid polypeptide reads, in one-letter code: MLKGIHKYLLMCFGTVLFTVQANAARIMSNNPIKEDWQCKVVDGEWSCKRAKKPKSVFDKKLTKTEKEKALADDLAWVKKPSYFVGGYYSNDNQFTKALCESKKTDLSYEKSEFDNYGTLIASGNVQVLQCDQELYGNNAIINLNSNNSAIRSLVMAGDVIVKQPSTGIVIRTTELDADMNNGTYSTGEAYFRLAREMPKTRIYDKEHFSGYLRGYAKTFKKESSGDIVLSDGYITSGDPYDNAWKITGNNIDIDTNTHMAYVKNGYFEIQDIPVMYIPYFSHPIDDRRRSGFLYPGFLQNANSGIGISVPYYFNLAPNYDLMLQSVIWSQRGIIENGTFRYMTKYFQGQFEGSLVPYDFKEGKMRSSFTLSTTGQYENINTNFKYEYVSDQNYYNDFSAGNVNLVTKTLLDREFDLTYTNDYVDSGLTVLDYGVVNPLLTVDNTPYAKLPEVKLNLTSDGYTPDYLTLSAQTLNTFFYKTAGPANTNPGAPQGTNVNAFRAYESPKIAFNFNKTWGYLKPSLELPIRYYKLNNKPTDIIKFKNSNVTSVLPIFNIDAGAYFDKDYTNENGTYTSTLHPRLFYTYIPYQDQTNIPLFDTSLQNEQYMQMFQVNRFTGYDRINNANQLTYAIEASTTNQDNGTTLASAKIGQMAYFADRKVNLCQGNSACPNPGLMDPFSTDTFSPIMSSFEFQVMKNIYLSAQVNYRVKQQNVDYQVYQLSYKDENENIFNVSYNNIANNWNSLTQQQIAEGAKPQPQETITLSTVLNITDHWGIAALWNYNFQQKQIANIFAGLQYNAKSWAVRALWQKTAYTNQDPNNPTLLGPLVNTYMFEFELKGLGGIGNTSDISSRLQQINGYQVGEWGNGI.

The signal sequence occupies residues 1-24 (MLKGIHKYLLMCFGTVLFTVQANA).

This sequence belongs to the LptD family. Component of the lipopolysaccharide transport and assembly complex. Interacts with LptE and LptA.

The protein resides in the cell outer membrane. Functionally, together with LptE, is involved in the assembly of lipopolysaccharide (LPS) at the surface of the outer membrane. The protein is LPS-assembly protein LptD of Francisella tularensis subsp. holarctica (strain LVS).